The primary structure comprises 85 residues: MAQKKGGGSTRNGRDSKPKMLGVKAFGGELITAGSIIVRQRGTKFHPGDNVGVGKDHTLYALVDGHVSFAVKGALSKHTVNVTAA.

Residues 1 to 10 (MAQKKGGGST) are compositionally biased toward gly residues. The disordered stretch occupies residues 1-20 (MAQKKGGGSTRNGRDSKPKM).

The protein belongs to the bacterial ribosomal protein bL27 family.

The protein is Large ribosomal subunit protein bL27 of Delftia acidovorans (strain DSM 14801 / SPH-1).